The chain runs to 261 residues: Spermatogenesis-associated protein 46 (261 aa).

Residues 140-159 (SSSSSPENTCPREATKKSRH) are disordered.

Testis-specific.

The protein localises to the nucleus membrane. Functionally, plays a role in spermiogenesis and fertilization. The protein is Spermatogenesis-associated protein 46 of Homo sapiens (Human).